Reading from the N-terminus, the 394-residue chain is 3-dehydroquinate synthase (394 aa).

NAD(+) contacts are provided by residues 112–116 (GVIGD), 136–137 (TT), K149, K158, and 176–179 (TLAT). E191, H254, and H276 together coordinate Zn(2+). Polar residues predominate over residues 371-388 (STNQHTTYSPHQHATTKP). Residues 371–394 (STNQHTTYSPHQHATTKPPNRRPH) are disordered.

It belongs to the sugar phosphate cyclases superfamily. Dehydroquinate synthase family. It depends on NAD(+) as a cofactor. Requires Co(2+) as cofactor. Zn(2+) is required as a cofactor.

The protein localises to the cytoplasm. The catalysed reaction is 7-phospho-2-dehydro-3-deoxy-D-arabino-heptonate = 3-dehydroquinate + phosphate. It participates in metabolic intermediate biosynthesis; chorismate biosynthesis; chorismate from D-erythrose 4-phosphate and phosphoenolpyruvate: step 2/7. Its function is as follows. Catalyzes the conversion of 3-deoxy-D-arabino-heptulosonate 7-phosphate (DAHP) to dehydroquinate (DHQ). The chain is 3-dehydroquinate synthase from Xylella fastidiosa (strain 9a5c).